Here is a 404-residue protein sequence, read N- to C-terminus: Cysteine desulfurase IscS (404 aa).

Residues 75-76 (AT), N155, Q183, and 203-205 (SAH) contribute to the pyridoxal 5'-phosphate site. At K206 the chain carries N6-(pyridoxal phosphate)lysine. Position 243 (T243) interacts with pyridoxal 5'-phosphate. Catalysis depends on C328, which acts as the Cysteine persulfide intermediate. A [2Fe-2S] cluster-binding site is contributed by C328.

Belongs to the class-V pyridoxal-phosphate-dependent aminotransferase family. NifS/IscS subfamily. As to quaternary structure, homodimer. Forms a heterotetramer with IscU, interacts with other sulfur acceptors. The cofactor is pyridoxal 5'-phosphate.

It localises to the cytoplasm. The catalysed reaction is (sulfur carrier)-H + L-cysteine = (sulfur carrier)-SH + L-alanine. It participates in cofactor biosynthesis; iron-sulfur cluster biosynthesis. Its function is as follows. Master enzyme that delivers sulfur to a number of partners involved in Fe-S cluster assembly, tRNA modification or cofactor biosynthesis. Catalyzes the removal of elemental sulfur atoms from cysteine to produce alanine. Functions as a sulfur delivery protein for Fe-S cluster synthesis onto IscU, an Fe-S scaffold assembly protein, as well as other S acceptor proteins. This Pseudomonas putida (strain ATCC 700007 / DSM 6899 / JCM 31910 / BCRC 17059 / LMG 24140 / F1) protein is Cysteine desulfurase IscS.